We begin with the raw amino-acid sequence, 43 residues long: S-layer protein 1 (43 aa).

It localises to the secreted. The protein resides in the cell wall. The protein localises to the S-layer. Its function is as follows. The S-layer is a paracrystalline mono-layered assembly of proteins which coat the surface of bacteria. The chain is S-layer protein 1 from Bacillus thuringiensis subsp. konkukian.